The primary structure comprises 505 residues: Transcription factor APG (505 aa).

7 disordered regions span residues 1 to 40, 61 to 99, 119 to 156, 169 to 242, 256 to 312, 324 to 344, and 469 to 505; these read MLRG…CSAA, GAAN…DTAP, PAAA…SGGG, PLQQ…APTT, AQRL…SQDE, RRSA…NLSE, and PPPP…VKQA. Residues 23–33 are compositionally biased toward pro residues; sequence PLRPPPPPPFQ. Over residues 131–144 the composition is skewed to polar residues; that stretch reads CSSSHGAVVPSTSA. The span at 174 to 199 shows a compositional bias: low complexity; it reads PSGGETASASASAAATSTVPVESTVV. Residues 200–212 show a composition bias toward polar residues; it reads QAATNRLRSTPLF. A compositionally biased stretch (pro residues) spans 222–239; that stretch reads PPKPSPRAAAPPPPPPLA. Residues 288–299 show a composition bias toward basic and acidic residues; it reads GDRRQLNWRDSH. Residues 300-310 are compositionally biased toward polar residues; it reads NNQSAEWSASQ. Residues 324–334 are compositionally biased toward basic residues; the sequence is RRSAARSSKRS. A compositionally biased stretch (basic and acidic residues) spans 335 to 344; sequence RTAEVHNLSE. The bHLH domain maps to 335 to 384; sequence RTAEVHNLSERRRRDRINEKMRALQELIPNCNKIDKASMLEEAIEYLKTL. Over residues 492–505 the composition is skewed to low complexity; it reads GAADAGNAPAVKQA.

The protein belongs to the bHLH protein family. Homodimer and heterodimer with ILI5 or ILI6.

The protein localises to the nucleus. Its function is as follows. Atypical bHLH transcription factor that acts as a negative regulator of grain size. Binds the transcription factor ILI6 and forms a heterodimer of antagonistic bHLH transcription factors that regulates grain length and weight by controlling cell elongation in lemma and palea. May be involved in the control of lamina inclination through brassinosteroid signaling pathway. The polypeptide is Transcription factor APG (APG) (Oryza sativa subsp. japonica (Rice)).